The sequence spans 217 residues: Ribosomal RNA large subunit methyltransferase E (217 aa).

Glycine 71, tryptophan 73, aspartate 91, aspartate 107, and aspartate 132 together coordinate S-adenosyl-L-methionine. Catalysis depends on lysine 172, which acts as the Proton acceptor.

The protein belongs to the class I-like SAM-binding methyltransferase superfamily. RNA methyltransferase RlmE family.

The protein localises to the cytoplasm. It catalyses the reaction uridine(2552) in 23S rRNA + S-adenosyl-L-methionine = 2'-O-methyluridine(2552) in 23S rRNA + S-adenosyl-L-homocysteine + H(+). Specifically methylates the uridine in position 2552 of 23S rRNA at the 2'-O position of the ribose in the fully assembled 50S ribosomal subunit. The chain is Ribosomal RNA large subunit methyltransferase E from Psychromonas ingrahamii (strain DSM 17664 / CCUG 51855 / 37).